A 24-amino-acid chain; its full sequence is Skin secreted peptide 1 (24 aa).

Expressed by the skin glands.

It localises to the secreted. This chain is Skin secreted peptide 1, found in Ascaphus truei (Coastal tailed frog).